Consider the following 298-residue polypeptide: Lipoyl synthase (298 aa).

The [4Fe-4S] cluster site is built by Cys40, Cys45, Cys51, Cys67, Cys71, Cys74, and Ser280. In terms of domain architecture, Radical SAM core spans Ala53–Thr269.

The protein belongs to the radical SAM superfamily. Lipoyl synthase family. [4Fe-4S] cluster serves as cofactor.

The protein localises to the cytoplasm. The catalysed reaction is [[Fe-S] cluster scaffold protein carrying a second [4Fe-4S](2+) cluster] + N(6)-octanoyl-L-lysyl-[protein] + 2 oxidized [2Fe-2S]-[ferredoxin] + 2 S-adenosyl-L-methionine + 4 H(+) = [[Fe-S] cluster scaffold protein] + N(6)-[(R)-dihydrolipoyl]-L-lysyl-[protein] + 4 Fe(3+) + 2 hydrogen sulfide + 2 5'-deoxyadenosine + 2 L-methionine + 2 reduced [2Fe-2S]-[ferredoxin]. The protein operates within protein modification; protein lipoylation via endogenous pathway; protein N(6)-(lipoyl)lysine from octanoyl-[acyl-carrier-protein]. In terms of biological role, catalyzes the radical-mediated insertion of two sulfur atoms into the C-6 and C-8 positions of the octanoyl moiety bound to the lipoyl domains of lipoate-dependent enzymes, thereby converting the octanoylated domains into lipoylated derivatives. This chain is Lipoyl synthase, found in Geobacillus sp. (strain WCH70).